The chain runs to 166 residues: Thioredoxin, mitochondrial (166 aa).

A mitochondrion-targeting transit peptide spans 1–59 (MAQRLLLGRFLTSVISRKPPQGVWASLTSKTLQTPQYNAGGLTVMPSPARTVHTTRVCL). Positions 61-166 (TFNVQDGPDF…LEAFLKKLIG (106 aa)) constitute a Thioredoxin domain. Residues Cys-90 and Cys-93 each act as nucleophile in the active site. A disulfide bridge connects residues Cys-90 and Cys-93. Lys-152 is subject to N6-acetyllysine; alternate. Lys-152 carries the post-translational modification N6-succinyllysine; alternate.

The protein belongs to the thioredoxin family. Monomer.

It is found in the mitochondrion. Functionally, important for the control of mitochondrial reactive oxygen species homeostasis, apoptosis regulation and cell viability. Is involved in various redox reactions including the reduction of protein disulfide bonds, through the reversible oxidation of its active center dithiol to a disulfide. This is Thioredoxin, mitochondrial (Txn2) from Mus musculus (Mouse).